The chain runs to 319 residues: Ribose-phosphate pyrophosphokinase (319 aa).

Residues 40 to 42 (DGE) and 99 to 100 (RQ) each bind ATP. Mg(2+) contacts are provided by His134 and Asp174. Lys198 is an active-site residue. D-ribose 5-phosphate contacts are provided by residues Arg200, Asp224, and 228-232 (DTAGT).

Belongs to the ribose-phosphate pyrophosphokinase family. Class I subfamily. Homohexamer. Requires Mg(2+) as cofactor.

Its subcellular location is the cytoplasm. It catalyses the reaction D-ribose 5-phosphate + ATP = 5-phospho-alpha-D-ribose 1-diphosphate + AMP + H(+). The protein operates within metabolic intermediate biosynthesis; 5-phospho-alpha-D-ribose 1-diphosphate biosynthesis; 5-phospho-alpha-D-ribose 1-diphosphate from D-ribose 5-phosphate (route I): step 1/1. In terms of biological role, involved in the biosynthesis of the central metabolite phospho-alpha-D-ribosyl-1-pyrophosphate (PRPP) via the transfer of pyrophosphoryl group from ATP to 1-hydroxyl of ribose-5-phosphate (Rib-5-P). This Xanthomonas axonopodis pv. citri (strain 306) protein is Ribose-phosphate pyrophosphokinase.